A 552-amino-acid chain; its full sequence is 5'-AMP-activated protein kinase catalytic subunit alpha-2 (552 aa).

The region spanning 16–268 (YVLGDTLGVG…IKDIREHEWF (253 aa)) is the Protein kinase domain. ATP is bound by residues 22-30 (LGVGTFGKV) and Lys-45. Asp-139 serves as the catalytic Proton acceptor. Position 172 is a phosphothreonine; by LKB1 and CaMKK2 (Thr-172). Thr-258 carries the phosphothreonine modification. Residues 291-376 (EAVKEVCEKF…PERMPPLIAD (86 aa)) are AIS. Position 377 is a phosphoserine (Ser-377). A disordered region spans residues 477-521 (VEQRSGSSTPQRSCSAAGLHRPRSSFDSTTAESHSLSGSLTGSLT). The span at 480-490 (RSGSSTPQRSC) shows a compositional bias: polar residues. Residue Ser-491 is modified to Phosphoserine. Residues 501-510 (SFDSTTAESH) are compositionally biased toward polar residues. Residues 511–521 (SLSGSLTGSLT) show a composition bias toward low complexity.

It belongs to the protein kinase superfamily. CAMK Ser/Thr protein kinase family. SNF1 subfamily. AMPK is a heterotrimer of an alpha catalytic subunit (PRKAA1 or PRKAA2), a beta (PRKAB1 or PRKAB2) and a gamma non-catalytic subunits (PRKAG1, PRKAG2 or PRKAG3). Interacts with FNIP1 and FNIP2. Associates with internalized insulin receptor/INSR complexes on Golgi/endosomal membranes; PRKAA2/AMPK2 together with ATIC and HACD3/PTPLAD1 is proposed to be part of a signaling network regulating INSR autophosphorylation and endocytosis. Interacts with ARF6. The phosphorylated form at Thr-172 mediated by CamKK2 interacts with ACSS2. The cofactor is Mg(2+). Post-translationally, ubiquitinated. In terms of processing, phosphorylated at Thr-172 by STK11/LKB1 in complex with STE20-related adapter-alpha (STRADA) pseudo kinase and CAB39. Also phosphorylated at Thr-172 by CAMKK2; triggered by a rise in intracellular calcium ions, without detectable changes in the AMP/ATP ratio. CAMKK1 can also phosphorylate Thr-172, but at much lower level. Dephosphorylated by protein phosphatase 2A and 2C (PP2A and PP2C). Phosphorylated by ULK1; leading to negatively regulate AMPK activity and suggesting the existence of a regulatory feedback loop between ULK1 and AMPK. Dephosphorylated by PPM1A and PPM1B at Thr-172 (mediated by STK11/LKB1).

The protein localises to the cytoplasm. The protein resides in the nucleus. It carries out the reaction L-seryl-[protein] + ATP = O-phospho-L-seryl-[protein] + ADP + H(+). The enzyme catalyses L-threonyl-[protein] + ATP = O-phospho-L-threonyl-[protein] + ADP + H(+). It catalyses the reaction L-seryl-[acetyl-CoA carboxylase] + ATP = O-phospho-L-seryl-[acetyl-CoA carboxylase] + ADP + H(+). The catalysed reaction is L-seryl-[3-hydroxy-3-methylglutaryl-coenzyme A reductase] + ATP = O-phospho-L-seryl-[3-hydroxy-3-methylglutaryl-coenzyme A reductase] + ADP + H(+). With respect to regulation, activated by phosphorylation on Thr-172. Binding of AMP to non-catalytic gamma subunit (PRKAG1, PRKAG2 or PRKAG3) results in allosteric activation, inducing phosphorylation on Thr-172. AMP-binding to gamma subunit also sustains activity by preventing dephosphorylation of Thr-172. ADP also stimulates Thr-172 phosphorylation, without stimulating already phosphorylated AMPK. ATP promotes dephosphorylation of Thr-172, rendering the enzyme inactive. Under physiological conditions AMPK mainly exists in its inactive form in complex with ATP, which is much more abundant than AMP. AMPK is activated by antihyperglycemic drug metformin, a drug prescribed to patients with type 2 diabetes: in vivo, metformin seems to mainly inhibit liver gluconeogenesis. However, metformin can be used to activate AMPK in muscle and other cells in culture or ex vivo. Selectively inhibited by compound C (6-[4-(2-Piperidin-1-yl-ethoxy)-phenyl)]-3-pyridin-4-yl-pyyrazolo[1,5-a] pyrimidine. Activated by resveratrol, a natural polyphenol present in red wine, and S17834, a synthetic polyphenol. Salicylate/aspirin directly activates kinase activity, primarily by inhibiting Thr-172 dephosphorylation. Functionally, catalytic subunit of AMP-activated protein kinase (AMPK), an energy sensor protein kinase that plays a key role in regulating cellular energy metabolism. In response to reduction of intracellular ATP levels, AMPK activates energy-producing pathways and inhibits energy-consuming processes: inhibits protein, carbohydrate and lipid biosynthesis, as well as cell growth and proliferation. AMPK acts via direct phosphorylation of metabolic enzymes, and by longer-term effects via phosphorylation of transcription regulators. Regulates lipid synthesis by phosphorylating and inactivating lipid metabolic enzymes such as ACACA, ACACB, GYS1, HMGCR and LIPE; regulates fatty acid and cholesterol synthesis by phosphorylating acetyl-CoA carboxylase (ACACA and ACACB) and hormone-sensitive lipase (LIPE) enzymes, respectively. Promotes lipolysis of lipid droplets by mediating phosphorylation of isoform 1 of CHKA (CHKalpha2). Regulates insulin-signaling and glycolysis by phosphorylating IRS1, PFKFB2 and PFKFB3. Involved in insulin receptor/INSR internalization. AMPK stimulates glucose uptake in muscle by increasing the translocation of the glucose transporter SLC2A4/GLUT4 to the plasma membrane, possibly by mediating phosphorylation of TBC1D4/AS160. Regulates transcription and chromatin structure by phosphorylating transcription regulators involved in energy metabolism such as CRTC2/TORC2, FOXO3, histone H2B, HDAC5, MEF2C, MLXIPL/ChREBP, EP300, HNF4A, p53/TP53, SREBF1, SREBF2 and PPARGC1A. Acts as a key regulator of glucose homeostasis in liver by phosphorylating CRTC2/TORC2, leading to CRTC2/TORC2 sequestration in the cytoplasm. In response to stress, phosphorylates 'Ser-36' of histone H2B (H2BS36ph), leading to promote transcription. Acts as a key regulator of cell growth and proliferation by phosphorylating FNIP1, TSC2, RPTOR, WDR24 and ATG1/ULK1: in response to nutrient limitation, negatively regulates the mTORC1 complex by phosphorylating RPTOR component of the mTORC1 complex and by phosphorylating and activating TSC2. Also phosphorylates and inhibits GATOR2 subunit WDR24 in response to nutrient limitation, leading to suppress glucose-mediated mTORC1 activation. In response to energetic stress, phosphorylates FNIP1, inactivating the non-canonical mTORC1 signaling, thereby promoting nuclear translocation of TFEB and TFE3, and inducing transcription of lysosomal or autophagy genes. In response to nutrient limitation, promotes autophagy by phosphorylating and activating ATG1/ULK1. In that process, it also activates WDR45/WIPI4. Phosphorylates CASP6, thereby preventing its autoprocessing and subsequent activation. AMPK also acts as a regulator of circadian rhythm by mediating phosphorylation of CRY1, leading to destabilize it. May regulate the Wnt signaling pathway by phosphorylating CTNNB1, leading to stabilize it. Also acts as a regulator of cellular polarity by remodeling the actin cytoskeleton; probably by indirectly activating myosin. Also phosphorylates CFTR, EEF2K, KLC1, NOS3 and SLC12A1. Plays an important role in the differential regulation of pro-autophagy (composed of PIK3C3, BECN1, PIK3R4 and UVRAG or ATG14) and non-autophagy (composed of PIK3C3, BECN1 and PIK3R4) complexes, in response to glucose starvation. Can inhibit the non-autophagy complex by phosphorylating PIK3C3 and can activate the pro-autophagy complex by phosphorylating BECN1. Upon glucose starvation, promotes ARF6 activation in a kinase-independent manner leading to cell migration. Upon glucose deprivation mediates the phosphorylation of ACSS2 at 'Ser-659', which exposes the nuclear localization signal of ACSS2, required for its interaction with KPNA1 and nuclear translocation. Upon stress, regulates mitochondrial fragmentation through phosphorylation of MTFR1L. The polypeptide is 5'-AMP-activated protein kinase catalytic subunit alpha-2 (Homo sapiens (Human)).